The primary structure comprises 392 residues: Putative cystathionine gamma-lyase 2 (392 aa).

The disordered stretch occupies residues 32 to 55 (LSSTYKQDNPGEPKGHDYSRAGNP). Over residues 40–50 (NPGEPKGHDYS) the composition is skewed to basic and acidic residues. Substrate contacts are provided by Arg51, Tyr103, and Arg108. Lys203 is modified (N6-(pyridoxal phosphate)lysine). Glu330 lines the substrate pocket.

Belongs to the trans-sulfuration enzymes family. The cofactor is pyridoxal 5'-phosphate.

The protein resides in the cytoplasm. The catalysed reaction is L,L-cystathionine + H2O = 2-oxobutanoate + L-cysteine + NH4(+). The protein operates within amino-acid biosynthesis; L-cysteine biosynthesis; L-cysteine from L-homocysteine and L-serine: step 2/2. This chain is Putative cystathionine gamma-lyase 2 (cth-2), found in Caenorhabditis elegans.